A 491-amino-acid polypeptide reads, in one-letter code: MDGVSTAILLLLLAVISLSLTFSSRGKGQLPPGPKPLPILGNLLQLRSQDLLTSLTKLSKEYGSVFTVYLGSRPVIVLSGYQTVKEALVDKGEEFSGRGAYPVFFNFTRGNGIAFSDGERWKILRRFSVQILRNFGMGKRSIEERILEEGSFLLEVLRKMEGKPFDPVFILSRSVSNIICSVVFGSRFDYDDERLLTIIHFINDNFKIMSSPWGEMYNIFPSVLDWIPGPHKRLFRNFGGMKDLIARSVREHQDSLDPNSPRDFIDCFLTKMAQEKQDPLSHFNMDTLLMTTHNLLFGGTETVGTTLRHAFLILMKYPKVQARVQEEIDRVVGRSRMPTLEDRTSMPYTDAVIHEVQRFADVIPMNLPHRVTRDTPFRGFLIPKGTDVITLLNTVHYDSDQFKTPQEFNPEHFLDDNHSFKKSPAFMPFSAGRRLCLGEPLARMELFIYFTSILQNFTLQPLVDPEDIDLTPLSSGLGNLPRPFQLCMHIR.

Residue Cys-436 participates in heme binding.

It belongs to the cytochrome P450 family. Heme serves as cofactor. In terms of tissue distribution, club cells in lung and liver.

It is found in the endoplasmic reticulum membrane. Its subcellular location is the microsome membrane. Its function is as follows. Involved in the regio- and stereoselective transformation of naphthalene to trans-1R-hydroxy-2R-glutathionyl-1,2-dihydronaphthalene in the presence of glutathione and glutathione S-transferases. It specifically catalyzes the production of a very reactive and potentially toxic intermediate, the 2R,2S arene oxide, that is associated with necrosis of the unciliated bronchiolar epithelial cells or club cells in lung. The sequence is that of Cytochrome P450 2F2 (Cyp2f2) from Mus musculus (Mouse).